Reading from the N-terminus, the 508-residue chain is Putative glycosyl hydrolase ecdF (508 aa).

The first 15 residues, 1–15 (MFLHILCLLAGQALA), serve as a signal peptide directing secretion. N-linked (GlcNAc...) asparagine glycosylation is found at asparagine 99, asparagine 122, asparagine 275, and asparagine 362.

Belongs to the glycosyl hydrolase 32 family.

This Aspergillus rugulosus (Emericella rugulosa) protein is Putative glycosyl hydrolase ecdF.